Reading from the N-terminus, the 420-residue chain is Serine hydroxymethyltransferase (420 aa).

Residues leucine 121 and 125–127 (GHL) contribute to the (6S)-5,6,7,8-tetrahydrofolate site. Residue lysine 229 is modified to N6-(pyridoxal phosphate)lysine.

It belongs to the SHMT family. In terms of assembly, homodimer. Pyridoxal 5'-phosphate serves as cofactor.

It is found in the cytoplasm. It catalyses the reaction (6R)-5,10-methylene-5,6,7,8-tetrahydrofolate + glycine + H2O = (6S)-5,6,7,8-tetrahydrofolate + L-serine. It functions in the pathway one-carbon metabolism; tetrahydrofolate interconversion. Its pathway is amino-acid biosynthesis; glycine biosynthesis; glycine from L-serine: step 1/1. Catalyzes the reversible interconversion of serine and glycine with tetrahydrofolate (THF) serving as the one-carbon carrier. This reaction serves as the major source of one-carbon groups required for the biosynthesis of purines, thymidylate, methionine, and other important biomolecules. Also exhibits THF-independent aldolase activity toward beta-hydroxyamino acids, producing glycine and aldehydes, via a retro-aldol mechanism. The protein is Serine hydroxymethyltransferase of Streptomyces coelicolor (strain ATCC BAA-471 / A3(2) / M145).